The following is a 303-amino-acid chain: Glycine--tRNA ligase alpha subunit (303 aa).

This sequence belongs to the class-II aminoacyl-tRNA synthetase family. As to quaternary structure, tetramer of two alpha and two beta subunits.

Its subcellular location is the cytoplasm. It carries out the reaction tRNA(Gly) + glycine + ATP = glycyl-tRNA(Gly) + AMP + diphosphate. In Stenotrophomonas maltophilia (strain K279a), this protein is Glycine--tRNA ligase alpha subunit.